Consider the following 100-residue polypeptide: Small ribosomal subunit protein uS14c (100 aa).

This sequence belongs to the universal ribosomal protein uS14 family. In terms of assembly, part of the 30S ribosomal subunit.

It is found in the plastid. It localises to the chloroplast. In terms of biological role, binds 16S rRNA, required for the assembly of 30S particles. In Draba nemorosa (Woodland whitlowgrass), this protein is Small ribosomal subunit protein uS14c.